The sequence spans 103 residues: Large ribosomal subunit protein bL21 (103 aa).

Belongs to the bacterial ribosomal protein bL21 family. Part of the 50S ribosomal subunit. Contacts protein L20.

This protein binds to 23S rRNA in the presence of protein L20. This chain is Large ribosomal subunit protein bL21, found in Alcanivorax borkumensis (strain ATCC 700651 / DSM 11573 / NCIMB 13689 / SK2).